Reading from the N-terminus, the 310-residue chain is Tagatose-6-phosphate kinase (310 aa).

Belongs to the carbohydrate kinase PfkB family. LacC subfamily.

It catalyses the reaction D-tagatofuranose 6-phosphate + ATP = D-tagatofuranose 1,6-bisphosphate + ADP + H(+). It functions in the pathway carbohydrate metabolism; D-tagatose 6-phosphate degradation; D-glyceraldehyde 3-phosphate and glycerone phosphate from D-tagatose 6-phosphate: step 1/2. The protein is Tagatose-6-phosphate kinase of Streptococcus agalactiae serotype V (strain ATCC BAA-611 / 2603 V/R).